We begin with the raw amino-acid sequence, 262 residues long: Acyl-[acyl-carrier-protein]--UDP-N-acetylglucosamine O-acyltransferase (262 aa).

This sequence belongs to the transferase hexapeptide repeat family. LpxA subfamily. In terms of assembly, homotrimer.

The protein resides in the cytoplasm. It carries out the reaction a (3R)-hydroxyacyl-[ACP] + UDP-N-acetyl-alpha-D-glucosamine = a UDP-3-O-[(3R)-3-hydroxyacyl]-N-acetyl-alpha-D-glucosamine + holo-[ACP]. Its pathway is glycolipid biosynthesis; lipid IV(A) biosynthesis; lipid IV(A) from (3R)-3-hydroxytetradecanoyl-[acyl-carrier-protein] and UDP-N-acetyl-alpha-D-glucosamine: step 1/6. Involved in the biosynthesis of lipid A, a phosphorylated glycolipid that anchors the lipopolysaccharide to the outer membrane of the cell. This chain is Acyl-[acyl-carrier-protein]--UDP-N-acetylglucosamine O-acyltransferase, found in Aliivibrio salmonicida (strain LFI1238) (Vibrio salmonicida (strain LFI1238)).